Reading from the N-terminus, the 137-residue chain is Fructose-bisphosphate aldolase C (137 aa).

The Schiff-base intermediate with dihydroxyacetone-P role is filled by Lys3.

Belongs to the class I fructose-bisphosphate aldolase family. In terms of assembly, homotetramer.

It carries out the reaction beta-D-fructose 1,6-bisphosphate = D-glyceraldehyde 3-phosphate + dihydroxyacetone phosphate. The protein operates within carbohydrate degradation; glycolysis; D-glyceraldehyde 3-phosphate and glycerone phosphate from D-glucose: step 4/4. This Gallus gallus (Chicken) protein is Fructose-bisphosphate aldolase C (ALDOC).